The primary structure comprises 341 residues: Tetraacyldisaccharide 4'-kinase (341 aa).

54 to 61 (TVGGAGKT) is an ATP binding site.

This sequence belongs to the LpxK family.

The catalysed reaction is a lipid A disaccharide + ATP = a lipid IVA + ADP + H(+). Its pathway is glycolipid biosynthesis; lipid IV(A) biosynthesis; lipid IV(A) from (3R)-3-hydroxytetradecanoyl-[acyl-carrier-protein] and UDP-N-acetyl-alpha-D-glucosamine: step 6/6. Its function is as follows. Transfers the gamma-phosphate of ATP to the 4'-position of a tetraacyldisaccharide 1-phosphate intermediate (termed DS-1-P) to form tetraacyldisaccharide 1,4'-bis-phosphate (lipid IVA). This Brucella ovis (strain ATCC 25840 / 63/290 / NCTC 10512) protein is Tetraacyldisaccharide 4'-kinase.